The following is a 473-amino-acid chain: Transposase for insertion sequence element IS1151 (473 aa).

It belongs to the transposase 11 family.

Functionally, involved in the transposition of the insertion sequence. This is Transposase for insertion sequence element IS1151 (tnp) from Clostridium perfringens.